We begin with the raw amino-acid sequence, 37 residues long: Large ribosomal subunit protein bL36 (37 aa).

Belongs to the bacterial ribosomal protein bL36 family.

The chain is Large ribosomal subunit protein bL36 from Synechococcus sp. (strain CC9311).